The primary structure comprises 240 residues: 3-deoxy-D-manno-octulosonic acid kinase (240 aa).

Asp-170 is a catalytic residue.

The protein belongs to the protein kinase superfamily. KdkA/RfaP family.

The protein localises to the cell inner membrane. It carries out the reaction an alpha-Kdo-(2-&gt;6)-lipid IVA + ATP = a 4-O-phospho-alpha-Kdo-(2-&gt;6)-lipid IVA + ADP + H(+). It participates in bacterial outer membrane biogenesis; LPS core biosynthesis. Catalyzes the ATP-dependent phosphorylation of the 3-deoxy-D-manno-octulosonic acid (Kdo) residue in Kdo-lipid IV(A) at the 4-OH position. In Mannheimia succiniciproducens (strain KCTC 0769BP / MBEL55E), this protein is 3-deoxy-D-manno-octulosonic acid kinase.